We begin with the raw amino-acid sequence, 253 residues long: Ribonuclease HII (253 aa).

Positions 70–253 constitute an RNase H type-2 domain; that stretch reads NLIAGIDEVG…KSFEPIKSML (184 aa). A divalent metal cation-binding residues include Asp76, Glu77, and Asp168.

The protein belongs to the RNase HII family. Mn(2+) is required as a cofactor. It depends on Mg(2+) as a cofactor.

It is found in the cytoplasm. It catalyses the reaction Endonucleolytic cleavage to 5'-phosphomonoester.. Functionally, endonuclease that specifically degrades the RNA of RNA-DNA hybrids. This is Ribonuclease HII from Streptococcus agalactiae serotype III (strain NEM316).